Consider the following 943-residue polypeptide: Calcium-activated chloride channel regulator 2 (943 aa).

The N-terminal stretch at M1–A31 is a signal peptide. Topologically, residues G32–L901 are extracellular. Positions N54–V205 are metalloprotease domain. 2 N-linked (GlcNAc...) asparagine glycosylation sites follow: N74 and N150. Position 164 (H164) interacts with Zn(2+). The active site involves E165. The Zn(2+) site is built by H168 and D175. The N-linked (GlcNAc...) asparagine glycan is linked to N231. One can recognise a VWFA domain in the interval V311–I483. N-linked (GlcNAc...) asparagine glycans are attached at residues N522 and N822. A helical transmembrane segment spans residues I902 to V922. The Cytoplasmic portion of the chain corresponds to T923–L943.

Belongs to the CLCR family. In terms of processing, the 141 kDa mature form is autoproteolytically cleaved by the metalloprotease domain, producing a 109 kDa form and a 35 kDa form. The cleavage is necessary for calcium-activated chloride channel (CaCC) activation activity. N-glycosylated. As to expression, expressed in cornea, skin, vagina, esophagus, and larynx (at protein level). Expressed in trachea and mammary gland. Weakly expressed in testis and kidney. Highly expressed in corneal epithelium, colon and trachea. Moderately expressed in brain, urogenital organs, bladder, uterus and prostate. Highly expressed in tissues containing stratified epithelium including cornea, esophagus, larynx, skin and vagina than those tissues which contain only epithelial monolayers. Expressed in normal breast epithelium but not in breast cancer. Highly expressed during epithelial stratification. Expressed in endothelial cells of lung. Expressed selectively in endothelia of small pulmonary arteries, arterioles, and subpleural and interlobular venules.

The protein localises to the cell membrane. It is found in the basal cell membrane. Its subcellular location is the cell junction. The protein resides in the secreted. Its function is as follows. Plays a role in modulating chloride current across the plasma membrane in a calcium-dependent manner, and cell adhesion. Involved in basal cell adhesion and/or stratification of squamous epithelia. May act as a tumor suppressor in breast and colorectal cancer. Plays a key role for cell adhesion in the beginning stages of lung metastasis via the binding to ITGB4. This Homo sapiens (Human) protein is Calcium-activated chloride channel regulator 2 (CLCA2).